The primary structure comprises 277 residues: Phosphatidylglycerol--prolipoprotein diacylglyceryl transferase (277 aa).

Transmembrane regions (helical) follow at residues 17 to 37, 63 to 83, and 101 to 121; these read LAIH…MLLG, ILFL…CLFY, and GGMA…WFAH. Arg146 serves as a coordination point for a 1,2-diacyl-sn-glycero-3-phospho-(1'-sn-glycerol). 3 helical membrane passes run 182–202, 209–229, and 234–254; these read SQVY…WLYA, GQVA…AEQF, and AFLG…LPMI.

Belongs to the Lgt family.

The protein resides in the cell inner membrane. It carries out the reaction L-cysteinyl-[prolipoprotein] + a 1,2-diacyl-sn-glycero-3-phospho-(1'-sn-glycerol) = an S-1,2-diacyl-sn-glyceryl-L-cysteinyl-[prolipoprotein] + sn-glycerol 1-phosphate + H(+). Its pathway is protein modification; lipoprotein biosynthesis (diacylglyceryl transfer). Functionally, catalyzes the transfer of the diacylglyceryl group from phosphatidylglycerol to the sulfhydryl group of the N-terminal cysteine of a prolipoprotein, the first step in the formation of mature lipoproteins. In Verminephrobacter eiseniae (strain EF01-2), this protein is Phosphatidylglycerol--prolipoprotein diacylglyceryl transferase.